The primary structure comprises 146 residues: DNA utilization protein HofO (146 aa).

Residues 20-37 (WAFWLLMLVTLIFLSSTH) form a helical membrane-spanning segment.

Its subcellular location is the cell inner membrane. In terms of biological role, required for the use of extracellular DNA as a nutrient. The protein is DNA utilization protein HofO (hofO) of Escherichia coli (strain K12).